We begin with the raw amino-acid sequence, 159 residues long: MRCPFCRHEDTQVVDSRVSEDGAAIRRRRRCSACDKRFTTYERVELNLPAVVKKDGSRTEFDRRKIVASMQLALRKRPVAADAIDAAVARIEYQLLATGEREVRSEKLGELVMNELRGLDTIAYVRFASVYRRFEDVSEFADVIEEFRRASPSKPSRKR.

Residues 3-34 (CPFCRHEDTQVVDSRVSEDGAAIRRRRRCSAC) fold into a zinc finger. The ATP-cone domain maps to 49 to 139 (PAVVKKDGSR…VYRRFEDVSE (91 aa)).

This sequence belongs to the NrdR family. The cofactor is Zn(2+).

Negatively regulates transcription of bacterial ribonucleotide reductase nrd genes and operons by binding to NrdR-boxes. The chain is Transcriptional repressor NrdR from Burkholderia ambifaria (strain MC40-6).